A 130-amino-acid polypeptide reads, in one-letter code: MAKAASTRPRRKERKNISSGVAHVLASFNNTMVTISDAQGNAISWSSAGSQGFKGSRKSTPYAAQVAAEDAGRKAREHGMETLEIEVSGPGAGRESALRALQTIGFSITAIRDLTPIPHNGCRPRKRRRV.

It belongs to the universal ribosomal protein uS11 family. Part of the 30S ribosomal subunit. Interacts with proteins S7 and S18. Binds to IF-3.

Located on the platform of the 30S subunit, it bridges several disparate RNA helices of the 16S rRNA. Forms part of the Shine-Dalgarno cleft in the 70S ribosome. This Acidiphilium cryptum (strain JF-5) protein is Small ribosomal subunit protein uS11.